Here is a 607-residue protein sequence, read N- to C-terminus: V-type proton ATPase catalytic subunit A (607 aa).

246–253 (GAFGCGKT) lines the ATP pocket.

The protein belongs to the ATPase alpha/beta chains family. V-ATPase is a heteromultimeric enzyme composed of a peripheral catalytic V1 complex (components A to H) attached to an integral membrane V0 proton pore complex (components: a, c, c', c'', d, e, f and VOA1).

Its subcellular location is the vacuole membrane. The catalysed reaction is ATP + H2O + 4 H(+)(in) = ADP + phosphate + 5 H(+)(out). Its function is as follows. Catalytic subunit of the V1 complex of vacuolar(H+)-ATPase (V-ATPase), a multisubunit enzyme composed of a peripheral complex (V1) that hydrolyzes ATP and a membrane integral complex (V0) that translocates protons. V-ATPase is responsible for acidifying and maintaining the pH of intracellular compartments. The protein is V-type proton ATPase catalytic subunit A (vma-1) of Neurospora crassa (strain ATCC 24698 / 74-OR23-1A / CBS 708.71 / DSM 1257 / FGSC 987).